The following is a 368-amino-acid chain: MAVAAAETRVFLEVRRRLQSALLILGGPDEGGMHLDISITPTSLLVRTPDGCTEIRLPAGVRLVPSSCGGLQYISGDGLHLRLRVQAESSPQPISVFNQSLQAQECCTFYCQSCGEVTIKDRKLLRVLPLPSENWSALVGEWCCHPDPFANRPLHPRENDCFIGDSFFLVNLKSDLEQEPKANTKVICKRCKVTLGETMSSETTKFYMTEVIIRPSEGSFPNIPRSQFLQSIIAQCLVELSSARSTFRFTIQGQDGKVYILLWVLNSDSLVIEPLRSSSCSRKFPLLESSLEAGSGSAWNAIKVLYQPCIKSRNKELASSWEGDISVHPLTLPSATCLELLLILSRNNASLPLSLRQMNSFQVAFLKM.

A2 is subject to N-acetylalanine. A BRAT1-like motif motif is present at residues 129–159 (PLPSENWSALVGEWCCHPDPFANRPLHPREN). C144 is a binding site for Zn(2+). Residues 214 to 236 (RPSEGSFPNIPRSQFLQSIIAQC) form an interaction with UBE2C region. The segment at 332 to 368 (LPSATCLELLLILSRNNASLPLSLRQMNSFQVAFLKM) is HECT-like.

In terms of assembly, interacts with UBE2C/UbcH10 (E2 ubiquitin-conjugating enzyme). In vitro, interacts with cyclin-B. Post-translationally, ubiquitinated by UBCH10 (E2 ubiquitin-conjugating enzyme).

It is found in the cytoplasm. It carries out the reaction S-ubiquitinyl-[E2 ubiquitin-conjugating enzyme]-L-cysteine + [acceptor protein]-L-lysine = [E2 ubiquitin-conjugating enzyme]-L-cysteine + N(6)-ubiquitinyl-[acceptor protein]-L-lysine.. Its pathway is protein modification; protein ubiquitination. Functionally, E3 ubiquitin-protein ligase which accepts ubiquitin from specific E2 ubiquitin-conjugating enzymes, and transfers it to substrates, generally promoting their degradation by the proteasome. Independently of its E3 ubiquitin-protein ligase activity, acts as an inhibitor of CPSF3 endonuclease activity by blocking CPSF3 active site. The polypeptide is E3 ubiquitin-protein ligase E3D (Ube3d) (Mus musculus (Mouse)).